Here is a 1265-residue protein sequence, read N- to C-terminus: Methionine synthase (1265 aa).

In terms of domain architecture, Hcy-binding spans 19–338 (RDEINAILQK…DHIREIAEAV (320 aa)). Residues cysteine 260, cysteine 323, and cysteine 324 each coordinate Zn(2+). The 262-residue stretch at 371-632 (FVNIGERCNV…IHKELLQLCE (262 aa)) folds into the Pterin-binding domain. (6S)-5,6,7,8-tetrahydrofolate is bound by residues 382 to 384 (GSR), aspartate 449, asparagine 470, aspartate 537, asparagine 579, arginine 585, and arginine 591. Residues 662 to 759 (QTDEWRNGPV…FMEKEREETR (98 aa)) form the B12-binding N-terminal domain. Methylcob(III)alamin contacts are provided by residues glutamate 709, 782-786 (GDVHD), histidine 785, serine 830, threonine 834, and alanine 886. Positions 772-907 (QGTIVLATVK…DENLKDEYFE (136 aa)) constitute a B12-binding domain. Positions 923–1265 (SLKERRYLPL…LGPILGYDTD (343 aa)) constitute an AdoMet activation domain. Residues aspartate 974, arginine 1172, and 1227 to 1228 (YF) contribute to the S-adenosyl-L-methionine site. Position 1264 is a phosphothreonine (threonine 1264).

Belongs to the vitamin-B12 dependent methionine synthase family. In terms of assembly, monomer. Dimer. Forms a multiprotein complex with MMACHC, MMADHC and MTRR. The cofactor is methylcob(III)alamin. Zn(2+) is required as a cofactor. In terms of tissue distribution, widely expressed. Expressed at the highest levels in pancreas, heart, brain, skeletal muscle and placenta. Expressed at lower levels in lung, liver and kidney.

The protein resides in the cytoplasm. The enzyme catalyses (6S)-5-methyl-5,6,7,8-tetrahydrofolate + L-homocysteine = (6S)-5,6,7,8-tetrahydrofolate + L-methionine. It participates in amino-acid biosynthesis; L-methionine biosynthesis via de novo pathway; L-methionine from L-homocysteine (MetH route): step 1/1. Functionally, catalyzes the transfer of a methyl group from methylcob(III)alamin (MeCbl) to homocysteine, yielding enzyme-bound cob(I)alamin and methionine in the cytosol. MeCbl is an active form of cobalamin (vitamin B12) used as a cofactor for methionine biosynthesis. Cob(I)alamin form is regenerated to MeCbl by a transfer of a methyl group from 5-methyltetrahydrofolate. The processing of cobalamin in the cytosol occurs in a multiprotein complex composed of at least MMACHC, MMADHC, MTRR (methionine synthase reductase) and MTR which may contribute to shuttle safely and efficiently cobalamin towards MTR in order to produce methionine. This Homo sapiens (Human) protein is Methionine synthase.